Reading from the N-terminus, the 124-residue chain is Sporulation initiation phosphotransferase F (124 aa).

The Response regulatory domain maps to 5–119 (KILIVDDQYG…EIRDAVKKYL (115 aa)). Mg(2+) contacts are provided by Asp-10, Asp-11, Asp-54, and Lys-56. Residue Asp-54 is modified to 4-aspartylphosphate.

Requires Mg(2+) as cofactor. Phosphorylated by KinA and KinB. Dephosphorylated by RapA and RapB.

Its subcellular location is the cytoplasm. In terms of biological role, key element in the phosphorelay regulating sporulation initiation. Phosphorylation of spo0B during sporulation initiation. This is Sporulation initiation phosphotransferase F (spo0F) from Bacillus subtilis (strain 168).